Reading from the N-terminus, the 79-residue chain is Darcynin (79 aa).

The protein belongs to the darcynin family.

The sequence is that of Darcynin from Chromobacterium violaceum (strain ATCC 12472 / DSM 30191 / JCM 1249 / CCUG 213 / NBRC 12614 / NCIMB 9131 / NCTC 9757 / MK).